Reading from the N-terminus, the 180-residue chain is 3-hydroxyanthranilate 3,4-dioxygenase (180 aa).

Position 46 (Arg46) interacts with O2. Fe cation contacts are provided by His50, Glu56, and His94. Glu56 serves as a coordination point for substrate. The substrate site is built by Arg98 and Glu109. Fe cation-binding residues include Cys124, Cys127, Cys161, and Cys164.

It belongs to the 3-HAO family. Homodimer. The cofactor is Fe(2+).

It catalyses the reaction 3-hydroxyanthranilate + O2 = (2Z,4Z)-2-amino-3-carboxymuconate 6-semialdehyde. It functions in the pathway cofactor biosynthesis; NAD(+) biosynthesis; quinolinate from L-kynurenine: step 3/3. In terms of biological role, catalyzes the oxidative ring opening of 3-hydroxyanthranilate to 2-amino-3-carboxymuconate semialdehyde, which spontaneously cyclizes to quinolinate. The chain is 3-hydroxyanthranilate 3,4-dioxygenase from Jannaschia sp. (strain CCS1).